Reading from the N-terminus, the 877-residue chain is GTPase activating protein homolog 2 (877 aa).

In terms of domain architecture, F-BAR spans 14 to 285 (FKFTDNLWDG…SVEMIDITND (272 aa)). Residues 130–214 (QEGIKLKQDM…SNCDEEYREQ (85 aa)) adopt a coiled-coil conformation. In terms of domain architecture, Rho-GAP spans 374-560 (VSLDELMNRQ…TLIKQIPPPL (187 aa)). Disordered regions lie at residues 589-612 (DQLS…GSGS), 644-704 (LPPL…AEPT), and 749-800 (AATP…LAST). Low complexity-rich tracts occupy residues 593–612 (NDDN…GSGS), 653–676 (SGSG…SPTT), and 749–779 (AATP…STST). Residues 780–800 (IKTSSPDRTTPLTSSPPLAST) are compositionally biased toward polar residues.

It is found in the cytoplasm. Its subcellular location is the contractile vacuole. Rho GTPase-activating protein involved in the signal transduction pathway. Regulator of the contractile vacuole network as well as involved in driving vacuole emptying. The protein is GTPase activating protein homolog 2 (mgp2) of Dictyostelium discoideum (Social amoeba).